A 50-amino-acid polypeptide reads, in one-letter code: Photosystem II reaction center protein M (50 aa).

A helical transmembrane segment spans residues 7-27; that stretch reads GFIISLLFVGIPTIFLVGLYI. The interval 31–50 is disordered; sequence DGEKSSFFSDSSKGKLGPKS.

This sequence belongs to the PsbM family. PSII is composed of 1 copy each of membrane proteins PsbA, PsbB, PsbC, PsbD, PsbE, PsbF, PsbH, PsbI, PsbJ, PsbK, PsbL, PsbM, PsbT, PsbX, PsbY, Psb30/Ycf12, peripheral proteins PsbO, CyanoQ (PsbQ), PsbU, PsbV and a large number of cofactors. It forms dimeric complexes.

It is found in the cellular thylakoid membrane. In terms of biological role, one of the components of the core complex of photosystem II (PSII). PSII is a light-driven water:plastoquinone oxidoreductase that uses light energy to abstract electrons from H(2)O, generating O(2) and a proton gradient subsequently used for ATP formation. It consists of a core antenna complex that captures photons, and an electron transfer chain that converts photonic excitation into a charge separation. This subunit is found at the monomer-monomer interface. In Prochlorococcus marinus (strain SARG / CCMP1375 / SS120), this protein is Photosystem II reaction center protein M.